The sequence spans 168 residues: NAD(P)H-quinone oxidoreductase subunit J, chloroplastic (168 aa).

It belongs to the complex I 30 kDa subunit family. As to quaternary structure, NDH is composed of at least 16 different subunits, 5 of which are encoded in the nucleus.

It localises to the plastid. The protein localises to the chloroplast thylakoid membrane. It catalyses the reaction a plastoquinone + NADH + (n+1) H(+)(in) = a plastoquinol + NAD(+) + n H(+)(out). The catalysed reaction is a plastoquinone + NADPH + (n+1) H(+)(in) = a plastoquinol + NADP(+) + n H(+)(out). Functionally, NDH shuttles electrons from NAD(P)H:plastoquinone, via FMN and iron-sulfur (Fe-S) centers, to quinones in the photosynthetic chain and possibly in a chloroplast respiratory chain. The immediate electron acceptor for the enzyme in this species is believed to be plastoquinone. Couples the redox reaction to proton translocation, and thus conserves the redox energy in a proton gradient. This Chaetosphaeridium globosum (Charophycean green alga) protein is NAD(P)H-quinone oxidoreductase subunit J, chloroplastic.